A 314-amino-acid chain; its full sequence is 2,3-dihydroxyphenylpropionate/2,3-dihydroxicinnamic acid 1,2-dioxygenase (314 aa).

His-115 functions as the Proton donor in the catalytic mechanism. His-179 functions as the Proton acceptor in the catalytic mechanism.

The protein belongs to the LigB/MhpB extradiol dioxygenase family. Homotetramer. Fe(2+) serves as cofactor.

It carries out the reaction 3-(2,3-dihydroxyphenyl)propanoate + O2 = (2Z,4E)-2-hydroxy-6-oxonona-2,4-dienedioate + H(+). It catalyses the reaction (2E)-3-(2,3-dihydroxyphenyl)prop-2-enoate + O2 = (2Z,4E,7E)-2-hydroxy-6-oxonona-2,4,7-trienedioate + H(+). The protein operates within aromatic compound metabolism; 3-phenylpropanoate degradation. Catalyzes the non-heme iron(II)-dependent oxidative cleavage of 2,3-dihydroxyphenylpropionic acid and 2,3-dihydroxicinnamic acid into 2-hydroxy-6-ketononadienedioate and 2-hydroxy-6-ketononatrienedioate, respectively. In Escherichia coli (strain 55989 / EAEC), this protein is 2,3-dihydroxyphenylpropionate/2,3-dihydroxicinnamic acid 1,2-dioxygenase.